Consider the following 156-residue polypeptide: Small ribosomal subunit protein uS7 (156 aa).

Belongs to the universal ribosomal protein uS7 family. In terms of assembly, part of the 30S ribosomal subunit. Contacts proteins S9 and S11.

Functionally, one of the primary rRNA binding proteins, it binds directly to 16S rRNA where it nucleates assembly of the head domain of the 30S subunit. Is located at the subunit interface close to the decoding center, probably blocks exit of the E-site tRNA. This chain is Small ribosomal subunit protein uS7, found in Idiomarina loihiensis (strain ATCC BAA-735 / DSM 15497 / L2-TR).